The following is a 327-amino-acid chain: Malate dehydrogenase (327 aa).

11-17 contributes to the NAD(+) binding site; it reads GAAGQIS. Residues Arg92 and Arg98 each contribute to the substrate site. Residues Asn105, Gln112, and 129-131 contribute to the NAD(+) site; that span reads VGN. Residues Asn131 and Arg162 each contribute to the substrate site. His187 serves as the catalytic Proton acceptor.

This sequence belongs to the LDH/MDH superfamily. MDH type 2 family.

The catalysed reaction is (S)-malate + NAD(+) = oxaloacetate + NADH + H(+). In terms of biological role, catalyzes the reversible oxidation of malate to oxaloacetate. The protein is Malate dehydrogenase of Teredinibacter turnerae (strain ATCC 39867 / T7901).